Here is a 666-residue protein sequence, read N- to C-terminus: Putative cysteine-rich receptor-like protein kinase 31 (666 aa).

The signal sequence occupies residues 1 to 23 (MCLNTLCAILCFVLTVSFGFVSA). 2 consecutive Gnk2-homologous domains span residues 24–130 (QKCG…NNSF) and 136–245 (LEPT…GYKY). The Extracellular portion of the chain corresponds to 24–280 (QKCGESVFFR…PDGKKISTGV (257 aa)). 5 N-linked (GlcNAc...) asparagine glycosylation sites follow: N52, N62, N104, N127, and N151. Residues 281–301 (IVAIVVSAVIFVVLVALGLVI) form a helical membrane-spanning segment. The Cytoplasmic portion of the chain corresponds to 302 to 666 (WKRRQSYKTL…SASITRATPR (365 aa)). A Protein kinase domain is found at 339–616 (FSRNNKLGQG…IFQMLTNSSI (278 aa)). ATP is bound by residues 345 to 353 (LGQGGFGEV) and K367. At Y412 the chain carries Phosphotyrosine. The active-site Proton acceptor is D464. Residue S468 is modified to Phosphoserine. T504 bears the Phosphothreonine mark. Residue Y512 is modified to Phosphotyrosine.

This sequence belongs to the protein kinase superfamily. Ser/Thr protein kinase family. CRK subfamily.

Its subcellular location is the membrane. It catalyses the reaction L-seryl-[protein] + ATP = O-phospho-L-seryl-[protein] + ADP + H(+). It carries out the reaction L-threonyl-[protein] + ATP = O-phospho-L-threonyl-[protein] + ADP + H(+). In Arabidopsis thaliana (Mouse-ear cress), this protein is Putative cysteine-rich receptor-like protein kinase 31 (CRK31).